Reading from the N-terminus, the 469-residue chain is Ectonucleoside triphosphate diphosphohydrolase 5 (469 aa).

The N-terminal stretch at 1-24 (MATPWGAVFFLLMIACAGSTVFYR) is a signal peptide. Residue Glu172 is the Proton acceptor of the active site. N-linked (GlcNAc...) asparagine glycosylation is present at Asn232. 2 disulfide bridges follow: Cys272–Cys303 and Cys363–Cys377.

The protein belongs to the GDA1/CD39 NTPase family. As to quaternary structure, monomer; active form. Homodimer; disulfide-linked. Homodimers are enzymatically inactive. It depends on Ca(2+) as a cofactor. Mg(2+) is required as a cofactor. N-glycosylated; high-mannose type. Expressed in fetal cells and most adult tissues.

Its subcellular location is the endoplasmic reticulum. It localises to the secreted. The catalysed reaction is a ribonucleoside 5'-diphosphate + H2O = a ribonucleoside 5'-phosphate + phosphate + H(+). It carries out the reaction GDP + H2O = GMP + phosphate + H(+). The enzyme catalyses UDP + H2O = UMP + phosphate + H(+). It catalyses the reaction IDP + H2O = IMP + phosphate + H(+). The catalysed reaction is CDP + H2O = CMP + phosphate + H(+). It carries out the reaction ADP + H2O = AMP + phosphate + H(+). The protein operates within protein modification; protein glycosylation. Its function is as follows. Hydrolyzes nucleoside diphosphates with a preference for GDP, IDP and UDP compared to ADP and CDP. In the lumen of the endoplasmic reticulum, hydrolyzes UDP that acts as an end-product feedback inhibitor of the UDP-Glc:glycoprotein glucosyltransferases. UMP can be transported back by an UDP-sugar antiporter to the cytosol where it is consumed to regenerate UDP-glucose. Therefore, it positively regulates protein reglucosylation by clearing UDP from the ER lumen and by promoting the regeneration of UDP-glucose. Protein reglucosylation is essential to proper glycoprotein folding and quality control in the ER. The sequence is that of Ectonucleoside triphosphate diphosphohydrolase 5 (ENTPD5) from Mesocricetus auratus (Golden hamster).